A 350-amino-acid polypeptide reads, in one-letter code: Protein RecA (350 aa).

68-75 is a binding site for ATP; the sequence is GPESSGKT.

The protein belongs to the RecA family.

The protein localises to the cytoplasm. Functionally, can catalyze the hydrolysis of ATP in the presence of single-stranded DNA, the ATP-dependent uptake of single-stranded DNA by duplex DNA, and the ATP-dependent hybridization of homologous single-stranded DNAs. It interacts with LexA causing its activation and leading to its autocatalytic cleavage. The sequence is that of Protein RecA from Mycolicibacterium gilvum (strain PYR-GCK) (Mycobacterium gilvum (strain PYR-GCK)).